A 66-amino-acid polypeptide reads, in one-letter code: Large ribosomal subunit protein bL32 (66 aa).

Positions 1-19 are enriched in basic residues; it reads MAIVPKRKTSKQRKHKRNT. Residues 1 to 21 are disordered; it reads MAIVPKRKTSKQRKHKRNTHS.

The protein belongs to the bacterial ribosomal protein bL32 family.

This Mycoplasmopsis synoviae (strain 53) (Mycoplasma synoviae) protein is Large ribosomal subunit protein bL32.